The chain runs to 439 residues: Proline--tRNA ligase (439 aa).

This sequence belongs to the class-II aminoacyl-tRNA synthetase family. ProS type 2 subfamily. As to quaternary structure, homodimer.

It is found in the cytoplasm. It carries out the reaction tRNA(Pro) + L-proline + ATP = L-prolyl-tRNA(Pro) + AMP + diphosphate. Functionally, catalyzes the attachment of proline to tRNA(Pro) in a two-step reaction: proline is first activated by ATP to form Pro-AMP and then transferred to the acceptor end of tRNA(Pro). This chain is Proline--tRNA ligase, found in Rhodopseudomonas palustris (strain HaA2).